Reading from the N-terminus, the 304-residue chain is Mycothiol acetyltransferase (304 aa).

Glu36 is a 1D-myo-inositol 2-(L-cysteinylamino)-2-deoxy-alpha-D-glucopyranoside binding site. 73 to 75 (LFV) contacts acetyl-CoA. Positions 145–304 (LEIQTYTESV…EEHCVWAKSD (160 aa)) constitute an N-acetyltransferase domain. The 1D-myo-inositol 2-(L-cysteinylamino)-2-deoxy-alpha-D-glucopyranoside site is built by Glu179, Lys225, and Glu236. 240–242 (VGL) lines the acetyl-CoA pocket. Tyr274 contributes to the 1D-myo-inositol 2-(L-cysteinylamino)-2-deoxy-alpha-D-glucopyranoside binding site. Residue 279-284 (NDPAVK) coordinates acetyl-CoA.

The protein belongs to the acetyltransferase family. MshD subfamily. As to quaternary structure, monomer.

The enzyme catalyses 1D-myo-inositol 2-(L-cysteinylamino)-2-deoxy-alpha-D-glucopyranoside + acetyl-CoA = mycothiol + CoA + H(+). In terms of biological role, catalyzes the transfer of acetyl from acetyl-CoA to desacetylmycothiol (Cys-GlcN-Ins) to form mycothiol. The protein is Mycothiol acetyltransferase of Corynebacterium aurimucosum (strain ATCC 700975 / DSM 44827 / CIP 107346 / CN-1) (Corynebacterium nigricans).